A 602-amino-acid chain; its full sequence is UvrABC system protein C (602 aa).

Residues 15–92 (DLPGSYQMKD…IQKYQPYYNI (78 aa)) enclose the GIY-YIG domain. The UVR domain occupies 197-232 (GKAKASLTAKMERAAKNLQFERAAEIRDQLHYIEQT).

The protein belongs to the UvrC family. Interacts with UvrB in an incision complex.

The protein resides in the cytoplasm. Functionally, the UvrABC repair system catalyzes the recognition and processing of DNA lesions. UvrC both incises the 5' and 3' sides of the lesion. The N-terminal half is responsible for the 3' incision and the C-terminal half is responsible for the 5' incision. The sequence is that of UvrABC system protein C from Lacticaseibacillus casei (strain BL23) (Lactobacillus casei).